We begin with the raw amino-acid sequence, 348 residues long: MDLELEPTLESIVQHDSLKWIFVGGKGGVGKTTTSSSVAVQLALAQPNEQFLLISTDPAHNLSDAFCQKFGKDARKVEGLPNLSCMEIDPEAAMSDLQQQASQYNNDPNDPLKSMMSDMTGSIPGIDEALSFMEVLKHIKNQKVLEGEDNSNAISYKTIIFDTAPTGHTLRFLQLPSTLEKLLSKFKDLSGKLGPMLSMMGGGQQQDIFEKLNEVQKNVSEVNEQFTNPELTTFICVCISEFLSLYETERMIQELMSYNMDVNSIVVNQLLFAEGDDHSCKRCESRWKMQKKYLDQMGELYEDYHLVKMPLLGCEIRGVENLKKFSKFLLKPYDPKADSDIVFDLEEK.

26–33 provides a ligand contact to ATP; that stretch reads KGGVGKTT. Asp-57 is a catalytic residue. Glu-241 and Asn-268 together coordinate ATP. 2 residues coordinate Zn(2+): Cys-280 and Cys-283. ATP is bound at residue 310–312; that stretch reads PLL.

Belongs to the arsA ATPase family. Homodimer. Component of the Golgi to ER traffic (GET) complex, which is composed of GET1, GET2 and GET3. Within the complex, GET1 and GET2 form a heterotetramer which is stabilized by phosphatidylinositol binding and which binds to the GET3 homodimer. Interacts with the chloride channel protein GEF1.

Its subcellular location is the cytoplasm. It is found in the endoplasmic reticulum. The protein resides in the golgi apparatus. ATPase required for the post-translational delivery of tail-anchored (TA) proteins to the endoplasmic reticulum. Recognizes and selectively binds the transmembrane domain of TA proteins in the cytosol. This complex then targets to the endoplasmic reticulum by membrane-bound receptors GET1 and GET2, where the tail-anchored protein is released for insertion. This process is regulated by ATP binding and hydrolysis. ATP binding drives the homodimer towards the closed dimer state, facilitating recognition of newly synthesized TA membrane proteins. ATP hydrolysis is required for insertion. Subsequently, the homodimer reverts towards the open dimer state, lowering its affinity for the GET1-GET2 receptor, and returning it to the cytosol to initiate a new round of targeting. Cooperates with the HDEL receptor ERD2 to mediate the ATP-dependent retrieval of resident ER proteins that contain a C-terminal H-D-E-L retention signal from the Golgi to the ER. Involved in low-level resistance to the oxyanions arsenite and arsenate, and in heat tolerance. The protein is ATPase GET3 of Debaryomyces hansenii (strain ATCC 36239 / CBS 767 / BCRC 21394 / JCM 1990 / NBRC 0083 / IGC 2968) (Yeast).